The chain runs to 194 residues: Fe/S biogenesis protein NfuA (194 aa).

Residues cysteine 152 and cysteine 155 each coordinate [4Fe-4S] cluster.

It belongs to the NfuA family. Homodimer. Requires [4Fe-4S] cluster as cofactor.

Involved in iron-sulfur cluster biogenesis. Binds a 4Fe-4S cluster, can transfer this cluster to apoproteins, and thereby intervenes in the maturation of Fe/S proteins. Could also act as a scaffold/chaperone for damaged Fe/S proteins. This Pseudomonas entomophila (strain L48) protein is Fe/S biogenesis protein NfuA.